We begin with the raw amino-acid sequence, 349 residues long: NAC domain-containing protein JA2 (349 aa).

Residues 14 to 163 (LPPGFRFYPT…EWVLCRIYKK (150 aa)) form the NAC domain. A DNA-binding region spans residues 111–169 (VGIKKALVFYVGKAPKGSKTNWIMHEYRLFESSRKNNGSSKLDEWVLCRIYKKNSSGPK). Residues 169-194 (KPLMSGLHSSNEYSHGSSTSSSSQFD) are disordered. Positions 177–191 (SSNEYSHGSSTSSSS) are enriched in low complexity.

In terms of tissue distribution, expressed in guard cells of the epidermis.

The protein localises to the nucleus. Transcription factor involved in abscisic acid-mediated stomatal closure. Regulates the expression of NCED1, a gene involved in the biosynthesis of abscisic acid (ABA). Required for the stomatal closure induced by the bacterial pathogen Pseudomonas syringae pv tomato DC3000, but not for stomatal reopening. The chain is NAC domain-containing protein JA2 from Solanum lycopersicum (Tomato).